Here is a 228-residue protein sequence, read N- to C-terminus: 2,3-bisphosphoglycerate-dependent phosphoglycerate mutase (228 aa).

Residues 8–15 (RHGQSEWN), 21–22 (TG), R60, 87–90 (ERHY), K98, 114–115 (RR), and 183–184 (GN) contribute to the substrate site. The active-site Tele-phosphohistidine intermediate is H9. E87 functions as the Proton donor/acceptor in the catalytic mechanism.

This sequence belongs to the phosphoglycerate mutase family. BPG-dependent PGAM subfamily.

The enzyme catalyses (2R)-2-phosphoglycerate = (2R)-3-phosphoglycerate. Its pathway is carbohydrate degradation; glycolysis; pyruvate from D-glyceraldehyde 3-phosphate: step 3/5. Functionally, catalyzes the interconversion of 2-phosphoglycerate and 3-phosphoglycerate. The chain is 2,3-bisphosphoglycerate-dependent phosphoglycerate mutase from Staphylococcus aureus (strain MRSA252).